The primary structure comprises 212 residues: Interleukin-6 (212 aa).

An N-terminal signal peptide occupies residues 1-29; it reads MTSFSTSAFRPVAFSLGLLLVMPAAFPAP. The cysteines at positions 72 and 78 are disulfide-linked. N73 carries N-linked (GlcNAc...) asparagine glycosylation. S81 is modified (phosphoserine). Residues C101 and C111 are joined by a disulfide bond. N-linked (GlcNAc...) asparagine glycans are attached at residues N160 and N172.

Belongs to the IL-6 superfamily. Component of a hexamer of two molecules each of IL6, IL6R and IL6ST; first binds to IL6R to associate with the signaling subunit IL6ST. Interacts with IL6R (via the N-terminal ectodomain); this interaction may be affected by IL6R-binding with SORL1, hence decreasing IL6 cis signaling. Interacts with SORL1 (via the N-terminal ectodomain); this interaction leads to IL6 internalization and lysosomal degradation. May form a trimeric complex with the soluble SORL1 ectodomain and soluble IL6R receptor; this interaction might stabilize circulating IL6, hence promoting IL6 trans signaling.

The protein resides in the secreted. Its function is as follows. Cytokine with a wide variety of biological functions in immunity, tissue regeneration, and metabolism. Binds to IL6R, then the complex associates to the signaling subunit IL6ST/gp130 to trigger the intracellular IL6-signaling pathway. The interaction with the membrane-bound IL6R and IL6ST stimulates 'classic signaling', whereas the binding of IL6 and soluble IL6R to IL6ST stimulates 'trans-signaling'. Alternatively, 'cluster signaling' occurs when membrane-bound IL6:IL6R complexes on transmitter cells activate IL6ST receptors on neighboring receiver cells. IL6 is a potent inducer of the acute phase response. Rapid production of IL6 contributes to host defense during infection and tissue injury, but excessive IL6 synthesis is involved in disease pathology. In the innate immune response, is synthesized by myeloid cells, such as macrophages and dendritic cells, upon recognition of pathogens through toll-like receptors (TLRs) at the site of infection or tissue injury. In the adaptive immune response, is required for the differentiation of B cells into immunoglobulin-secreting cells. Plays a major role in the differentiation of CD4(+) T cell subsets. Essential factor for the development of T follicular helper (Tfh) cells that are required for the induction of germinal-center formation. Required to drive naive CD4(+) T cells to the Th17 lineage. Also required for proliferation of myeloma cells and the survival of plasmablast cells. In terms of biological role, acts as an essential factor in bone homeostasis and on vessels directly or indirectly by induction of VEGF, resulting in increased angiogenesis activity and vascular permeability. Induces, through 'trans-signaling' and synergistically with IL1B and TNF, the production of VEGF. Involved in metabolic controls, is discharged into the bloodstream after muscle contraction increasing lipolysis and improving insulin resistance. 'Trans-signaling' in central nervous system also regulates energy and glucose homeostasis. Mediates, through GLP-1, crosstalk between insulin-sensitive tissues, intestinal L cells and pancreatic islets to adapt to changes in insulin demand. Also acts as a myokine. Plays a protective role during liver injury, being required for maintenance of tissue regeneration. Also has a pivotal role in iron metabolism by regulating HAMP/hepcidin expression upon inflammation or bacterial infection. Through activation of IL6ST-YAP-NOTCH pathway, induces inflammation-induced epithelial regeneration. This chain is Interleukin-6 (IL6), found in Saimiri sciureus (Common squirrel monkey).